Reading from the N-terminus, the 554-residue chain is Potassium-transporting ATPase potassium-binding subunit (554 aa).

Transmembrane regions (helical) follow at residues 1 to 21 (MSSQ…LALA), 59 to 79 (WPAY…FLYL), 131 to 151 (GLAV…VALV), 174 to 194 (VRIL…AGAI), 246 to 266 (PNPL…FALT), 279 to 299 (GYAI…LMMW), 323 to 343 (FGIA…TGAV), 352 to 372 (GFGG…PGGV), 375 to 395 (GLYG…LMVG), 412 to 432 (FAAC…AVAM), 481 to 501 (IGIA…ALAG), and 525 to 545 (GLLV…ALAL).

Belongs to the KdpA family. The system is composed of three essential subunits: KdpA, KdpB and KdpC.

The protein localises to the cell membrane. Part of the high-affinity ATP-driven potassium transport (or Kdp) system, which catalyzes the hydrolysis of ATP coupled with the electrogenic transport of potassium into the cytoplasm. This subunit binds the extracellular potassium ions and delivers the ions to the membrane domain of KdpB through an intramembrane tunnel. This Streptomyces griseus subsp. griseus (strain JCM 4626 / CBS 651.72 / NBRC 13350 / KCC S-0626 / ISP 5235) protein is Potassium-transporting ATPase potassium-binding subunit.